Here is a 406-residue protein sequence, read N- to C-terminus: MMTSCRNIDLGTMMMACGCGRRQFPSLAKTVCKFTSSNRSYGGLVGSCKAVPTKSKEISLLNGIGQSQTVSFDLKQESKQPISLVTLFELVAVDLQTLNDNLLSIVGAENPVLISAAEQIFGAGGKRMRPGLVFLVSHATAELAGLKELTTEHRRLAEIIEMIHTASLIHDDVLDESDMRRGKETVHELFGTRVAVLAGDFMFAQASWYLANLENLEVIKLISQVIKDFASGEIKQASSLFDCDTKLDEYLLKSFYKTASLVAASTKGAAIFSRVEPDVTEQMYEFGKNLGLSFQIVDDILDFTQSTEQLGKPAGSDLAKGNLTAPVIFALEREPRLREIIESEFCEAGSLEEAIEAVTKGGGIKRAQELAREKADDAIKNLQCLPRSGFRSALEDMVLYNLERID.

Residues 1-71 constitute a chloroplast transit peptide; that stretch reads MMTSCRNIDL…NGIGQSQTVS (71 aa). 3 residues coordinate isopentenyl diphosphate: lysine 126, arginine 129, and histidine 164. The Mg(2+) site is built by aspartate 171 and aspartate 175. Arginine 180 is a binding site for an all-trans-polyprenyl diphosphate. Arginine 181 is a binding site for isopentenyl diphosphate. An all-trans-polyprenyl diphosphate contacts are provided by lysine 257, threonine 258, glutamine 295, and lysine 312.

The protein belongs to the FPP/GGPP synthase family. In terms of assembly, homodimer. Interacts with FBN5. Requires Mg(2+) as cofactor. As to expression, higher expression in leaves than in roots.

The protein localises to the plastid. It localises to the chloroplast. The enzyme catalyses 5 isopentenyl diphosphate + (2E,6E,10E)-geranylgeranyl diphosphate = all-trans-nonaprenyl diphosphate + 5 diphosphate. The catalysed reaction is isopentenyl diphosphate + (2E,6E)-farnesyl diphosphate = (2E,6E,10E)-geranylgeranyl diphosphate + diphosphate. Functionally, involved in providing solanesyl diphosphate for plastoquinone-9 (PQ-9) formation in plastids. Catalyzes the elongation of the prenyl side chain of PQ-9 in plastids. Contributes to the biosynthesis of plastochromanol-8 (PC-8) in plastids. Does not contribute to the synthesis of tocopherol or ubiquinone. PQ-9 and PC-8 are lipophilic antioxidants that act as protectant against photooxidative stress under high light stress conditions. Prefers geranylgeranyl diphosphate to farnesyl diphosphate as substrate. No activity with geranyl diphosphate or dimethylallyl diphosphate as substrate. This chain is Solanesyl diphosphate synthase 1, chloroplastic, found in Arabidopsis thaliana (Mouse-ear cress).